Here is a 535-residue protein sequence, read N- to C-terminus: Putative cysteine ligase BshC (535 aa).

Residues 420-477 adopt a coiled-coil conformation; that stretch reads DTFKALKESINSAYKNLQEKLAPLGADFQKLTGENLGRVMAQVKYLEERAQKYHREKN.

Belongs to the BshC family.

In terms of biological role, involved in bacillithiol (BSH) biosynthesis. May catalyze the last step of the pathway, the addition of cysteine to glucosamine malate (GlcN-Mal) to generate BSH. This Carboxydothermus hydrogenoformans (strain ATCC BAA-161 / DSM 6008 / Z-2901) protein is Putative cysteine ligase BshC.